Consider the following 76-residue polypeptide: UPF0248 protein PAE2518 (76 aa).

It belongs to the UPF0248 family.

This Pyrobaculum aerophilum (strain ATCC 51768 / DSM 7523 / JCM 9630 / CIP 104966 / NBRC 100827 / IM2) protein is UPF0248 protein PAE2518.